The primary structure comprises 427 residues: Enolase (427 aa).

Residue Gln163 participates in (2R)-2-phosphoglycerate binding. Glu205 (proton donor) is an active-site residue. Positions 242, 285, and 312 each coordinate Mg(2+). (2R)-2-phosphoglycerate is bound by residues Lys337, Arg366, Ser367, and Lys388. The active-site Proton acceptor is the Lys337.

The protein belongs to the enolase family. It depends on Mg(2+) as a cofactor.

It localises to the cytoplasm. It is found in the secreted. Its subcellular location is the cell surface. It catalyses the reaction (2R)-2-phosphoglycerate = phosphoenolpyruvate + H2O. The protein operates within carbohydrate degradation; glycolysis; pyruvate from D-glyceraldehyde 3-phosphate: step 4/5. Functionally, catalyzes the reversible conversion of 2-phosphoglycerate (2-PG) into phosphoenolpyruvate (PEP). It is essential for the degradation of carbohydrates via glycolysis. This Rhodopseudomonas palustris (strain ATCC BAA-98 / CGA009) protein is Enolase.